Consider the following 409-residue polypeptide: Lipoyl synthase, mitochondrial (409 aa).

A disordered region spans residues 21–41 (QQQVPPSEEPRNESGAANPPL). [4Fe-4S] cluster is bound by residues Cys125, Cys130, Cys136, Cys159, Cys163, Cys166, and Ser375. The 223-residue stretch at 142 to 364 (EEGDGTATAT…EKEALDMGFL (223 aa)) folds into the Radical SAM core domain.

Belongs to the radical SAM superfamily. Lipoyl synthase family. [4Fe-4S] cluster serves as cofactor.

The protein localises to the mitochondrion. The catalysed reaction is [[Fe-S] cluster scaffold protein carrying a second [4Fe-4S](2+) cluster] + N(6)-octanoyl-L-lysyl-[protein] + 2 oxidized [2Fe-2S]-[ferredoxin] + 2 S-adenosyl-L-methionine + 4 H(+) = [[Fe-S] cluster scaffold protein] + N(6)-[(R)-dihydrolipoyl]-L-lysyl-[protein] + 4 Fe(3+) + 2 hydrogen sulfide + 2 5'-deoxyadenosine + 2 L-methionine + 2 reduced [2Fe-2S]-[ferredoxin]. The protein operates within protein modification; protein lipoylation via endogenous pathway; protein N(6)-(lipoyl)lysine from octanoyl-[acyl-carrier-protein]: step 2/2. In terms of biological role, catalyzes the radical-mediated insertion of two sulfur atoms into the C-6 and C-8 positions of the octanoyl moiety bound to the lipoyl domains of lipoate-dependent enzymes, thereby converting the octanoylated domains into lipoylated derivatives. The protein is Lipoyl synthase, mitochondrial of Trypanosoma brucei gambiense (strain MHOM/CI/86/DAL972).